Reading from the N-terminus, the 278-residue chain is DNA repair protein RecO (278 aa).

Over residues 1-12 (MGTNDALTSTED) the composition is skewed to polar residues. Positions 1–41 (MGTNDALTSTEDAVTAGANDAPLPAPPEPPRKARRATSRTS) are disordered.

This sequence belongs to the RecO family.

Involved in DNA repair and RecF pathway recombination. In Burkholderia orbicola (strain AU 1054), this protein is DNA repair protein RecO.